Here is a 398-residue protein sequence, read N- to C-terminus: Acetate kinase (398 aa).

N8 lines the Mg(2+) pocket. Residue K15 coordinates ATP. R89 serves as a coordination point for substrate. D146 acts as the Proton donor/acceptor in catalysis. Residues 206-210 (HIGNG), 283-285 (DMR), and 331-335 (GMGEN) contribute to the ATP site. E383 is a Mg(2+) binding site.

The protein belongs to the acetokinase family. As to quaternary structure, homodimer. The cofactor is Mg(2+). Mn(2+) serves as cofactor.

The protein localises to the cytoplasm. It catalyses the reaction acetate + ATP = acetyl phosphate + ADP. Its pathway is metabolic intermediate biosynthesis; acetyl-CoA biosynthesis; acetyl-CoA from acetate: step 1/2. Catalyzes the formation of acetyl phosphate from acetate and ATP. Can also catalyze the reverse reaction. The polypeptide is Acetate kinase (Streptococcus pyogenes serotype M5 (strain Manfredo)).